Consider the following 403-residue polypeptide: Propionate kinase (403 aa).

It belongs to the acetokinase family. PduW subfamily.

The protein localises to the cytoplasm. The catalysed reaction is propanoate + ATP = propanoyl phosphate + ADP. The protein operates within polyol metabolism; 1,2-propanediol degradation. Works with phosphate acetyltransferase (pta) to capture exogenous propionate and regenerate propionyl-CoA during degradation of 1,2-propanediol (1,2-PD). The sequence is that of Propionate kinase from Citrobacter rodentium (strain ICC168) (Citrobacter freundii biotype 4280).